A 134-amino-acid chain; its full sequence is Phosphoribosyl-AMP cyclohydrolase (134 aa).

Aspartate 77 contributes to the Mg(2+) binding site. Zn(2+) is bound at residue cysteine 78. Aspartate 79 and aspartate 81 together coordinate Mg(2+). Zn(2+) is bound by residues cysteine 95 and cysteine 102.

This sequence belongs to the PRA-CH family. In terms of assembly, homodimer. The cofactor is Mg(2+). It depends on Zn(2+) as a cofactor.

The protein resides in the cytoplasm. It catalyses the reaction 1-(5-phospho-beta-D-ribosyl)-5'-AMP + H2O = 1-(5-phospho-beta-D-ribosyl)-5-[(5-phospho-beta-D-ribosylamino)methylideneamino]imidazole-4-carboxamide. It functions in the pathway amino-acid biosynthesis; L-histidine biosynthesis; L-histidine from 5-phospho-alpha-D-ribose 1-diphosphate: step 3/9. Functionally, catalyzes the hydrolysis of the adenine ring of phosphoribosyl-AMP. The protein is Phosphoribosyl-AMP cyclohydrolase of Pseudomonas aeruginosa (strain LESB58).